The primary structure comprises 306 residues: Ornithine carbamoyltransferase (306 aa).

Carbamoyl phosphate contacts are provided by residues 50 to 53, Gln-77, Arg-101, and 128 to 131; these read STRT and HPCQ. L-ornithine-binding positions include Asn-160, Asp-224, and 228–229; that span reads SM. Residues 261-262 and Arg-289 contribute to the carbamoyl phosphate site; that span reads CL.

Belongs to the aspartate/ornithine carbamoyltransferase superfamily. OTCase family.

It localises to the cytoplasm. The enzyme catalyses carbamoyl phosphate + L-ornithine = L-citrulline + phosphate + H(+). It participates in amino-acid biosynthesis; L-arginine biosynthesis; L-arginine from L-ornithine and carbamoyl phosphate: step 1/3. Functionally, reversibly catalyzes the transfer of the carbamoyl group from carbamoyl phosphate (CP) to the N(epsilon) atom of ornithine (ORN) to produce L-citrulline. The chain is Ornithine carbamoyltransferase from Aquifex aeolicus (strain VF5).